The following is a 792-amino-acid chain: Zinc finger CCCH domain-containing protein 11A (792 aa).

3 C3H1-type zinc fingers span residues 2–29 (PNQGEDCYFYFYSTCAKGDSCPFRHCEA), 31–57 (LGNETVCTLWQEGRCFRQVCRFRHMEI), and 60–87 (KRSEIPCYWENQPVGCQKLNCAFHHTRS). Disordered stretches follow at residues 103–191 (PTVP…VHNG), 223–331 (KKMK…KAGE), and 345–443 (ASQK…RSMQ). Ser-108 carries the phosphoserine modification. Residues Lys-114 and Lys-124 each participate in a glycyl lysine isopeptide (Lys-Gly) (interchain with G-Cter in SUMO2) cross-link. Residues 115-135 (TSQLTVQQSKLSVQSNPSPQL) show a composition bias toward polar residues. Phosphoserine is present on Ser-132. A Glycyl lysine isopeptide (Lys-Gly) (interchain with G-Cter in SUMO2) cross-link involves residue Lys-140. 3 positions are modified to phosphoserine: Ser-149, Ser-171, and Ser-289. The span at 160 to 175 (ADDDEDDDDQFSEEGD) shows a compositional bias: acidic residues. Basic and acidic residues-rich tracts occupy residues 308 to 331 (KKVESPETNIDKAPKKERGHKAGE) and 345 to 360 (ASQKRGELQTKLKAEE). The stretch at 338–360 (EEILLERASQKRGELQTKLKAEE) forms a coiled coil. Position 346 is a phosphoserine (Ser-346). A compositionally biased stretch (low complexity) spans 367-376 (SPSGTKSSSS). Basic and acidic residues-rich tracts occupy residues 393 to 405 (QQEMERQKSKKDT) and 431 to 443 (QPEEPAGRARSMQ). Lys-454 participates in a covalent cross-link: Glycyl lysine isopeptide (Lys-Gly) (interchain with G-Cter in SUMO2). Disordered stretches follow at residues 458–531 (ALRV…PTKL) and 545–571 (QRLQERGASQKEKAALSSVRGDEASSY). The span at 461–473 (VQQSSESSGNSRP) shows a compositional bias: polar residues. Composition is skewed to basic and acidic residues over residues 492–501 (GVKEEKKCGL) and 545–558 (QRLQERGASQKEKA). A Glycyl lysine isopeptide (Lys-Gly) (interchain with G-Cter in SUMO2) cross-link involves residue Lys-601. Positions 690-750 (LSEDKPVTMS…SASTGKPPLS (61 aa)) are disordered. Residues 698–715 (MSETENPKDSSVLSSAQA) are compositionally biased toward polar residues. Residues 717 to 730 (SEPLLPEGSGPSSS) are compositionally biased toward low complexity.

As to quaternary structure, interacts with TREX complex components THOC2, DDX39 and POLDIP3; the interactions are ATP-dependent. Interacts with PABPN1; this interaction retains ZC3H11A in nuclear speckles. Interacts with KPNA3.

It is found in the nucleus speckle. Its function is as follows. Through its association with TREX complex components, may participate in the export and post-transcriptional coordination of selected mRNA transcripts, including those required to maintain the metabolic processes in embryonic cells. Binds RNA. The protein is Zinc finger CCCH domain-containing protein 11A (Zc3h11a) of Mus musculus (Mouse).